The following is a 410-amino-acid chain: Probable intron-encoded endonuclease bI1 (410 aa).

The COB exon 1 encoded stretch occupies residues 1 to 131; that stretch reads MRLLKTHPIL…VLMMAIAFLG (131 aa). The next 3 helical transmembrane spans lie at 32-52, 75-95, and 112-132; these read FGSLLGVCLIIQILTGVFLAM, GWLIRYLHANTASFFFIFVYL, and LLWSIGVIILVLMMAIAFLGF. Residues 132-410 are COB intron 1 encoded; that stretch reads FNGQKYMCFY…KKNYIVKVIK (279 aa). A GIY-YIG domain is found at 196–286; it reads PFSGIYMIVN…LETLKPEYNI (91 aa).

It to endonucleases of group I introns of fungi and phage. In terms of processing, the mature protein may arise from proteolytic cleavage of an in-frame translation of COB exon 1 plus intron 1, containing the bI1 open reading frame.

The protein resides in the mitochondrion. The protein localises to the membrane. Its function is as follows. Mitochondrial DNA endonuclease involved in intron homing. In Mycosarcoma maydis (Corn smut fungus), this protein is Probable intron-encoded endonuclease bI1 (bI1).